Reading from the N-terminus, the 304-residue chain is Ornithine carbamoyltransferase (304 aa).

Residues 53 to 56 (STRT), Gln-80, Arg-104, and 131 to 134 (HPCQ) each bind carbamoyl phosphate. L-ornithine is bound by residues Asn-162, Asp-219, and 223-224 (SM). Residues 259 to 260 (CL) and Arg-287 contribute to the carbamoyl phosphate site.

This sequence belongs to the aspartate/ornithine carbamoyltransferase superfamily. OTCase family.

The protein localises to the cytoplasm. It catalyses the reaction carbamoyl phosphate + L-ornithine = L-citrulline + phosphate + H(+). It functions in the pathway amino-acid biosynthesis; L-arginine biosynthesis; L-arginine from L-ornithine and carbamoyl phosphate: step 1/3. In terms of biological role, reversibly catalyzes the transfer of the carbamoyl group from carbamoyl phosphate (CP) to the N(epsilon) atom of ornithine (ORN) to produce L-citrulline. In Herminiimonas arsenicoxydans, this protein is Ornithine carbamoyltransferase.